The sequence spans 498 residues: Glutamate--tRNA ligase (498 aa).

The 'HIGH' region motif lies at 11 to 21; it reads PSPTGHLHIGN. A 'KMSKS' region motif is present at residues 261–265; that stretch reads KLSKR. Position 264 (Lys-264) interacts with ATP.

Belongs to the class-I aminoacyl-tRNA synthetase family. Glutamate--tRNA ligase type 1 subfamily. Monomer.

It is found in the cytoplasm. It catalyses the reaction tRNA(Glu) + L-glutamate + ATP = L-glutamyl-tRNA(Glu) + AMP + diphosphate. Catalyzes the attachment of glutamate to tRNA(Glu) in a two-step reaction: glutamate is first activated by ATP to form Glu-AMP and then transferred to the acceptor end of tRNA(Glu). The polypeptide is Glutamate--tRNA ligase (Oenococcus oeni (strain ATCC BAA-331 / PSU-1)).